A 239-amino-acid chain; its full sequence is 1-(5-phosphoribosyl)-5-[(5-phosphoribosylamino)methylideneamino] imidazole-4-carboxamide isomerase (239 aa).

D8 serves as the catalytic Proton acceptor. The Proton donor role is filled by D129.

Belongs to the HisA/HisF family.

The protein localises to the cytoplasm. The catalysed reaction is 1-(5-phospho-beta-D-ribosyl)-5-[(5-phospho-beta-D-ribosylamino)methylideneamino]imidazole-4-carboxamide = 5-[(5-phospho-1-deoxy-D-ribulos-1-ylimino)methylamino]-1-(5-phospho-beta-D-ribosyl)imidazole-4-carboxamide. It participates in amino-acid biosynthesis; L-histidine biosynthesis; L-histidine from 5-phospho-alpha-D-ribose 1-diphosphate: step 4/9. This chain is 1-(5-phosphoribosyl)-5-[(5-phosphoribosylamino)methylideneamino] imidazole-4-carboxamide isomerase, found in Cereibacter sphaeroides (strain ATCC 17025 / ATH 2.4.3) (Rhodobacter sphaeroides).